We begin with the raw amino-acid sequence, 308 residues long: MGHLTPVAAPRLACAFVPTNAQRRATAKRKLERQLERRAKQAKRRRILTIVGGSLAAVAVIVAVVVTVVVNKDDHQSTTSATPTDSASTSPPQAATAPPLPPFKPSANLGANCQYPPSPDKAVKPVKLPRTGKVPTDPAQVSVSMVTNQGNIGLMLANNESPCTVNSFVSLAQQGFFKGTTCHRLTTSPMLAVLQCGDPKGDGTGGPGYQFANEYPTDQYSANDPKLNEPVIYPRGTLAMANAGPNTNSSQFFMVYRDSKLPPQYTVFGTIQADGLTTLDKIAKAGVAGGGEDGKPATEVTITSVLLD.

Residues 74-123 (DHQSTTSATPTDSASTSPPQAATAPPLPPFKPSANLGANCQYPPSPDKAV) form a disordered region. Residues 77 to 97 (STTSATPTDSASTSPPQAATA) are compositionally biased toward low complexity. In terms of domain architecture, PPIase cyclophilin-type spans 139–307 (AQVSVSMVTN…TEVTITSVLL (169 aa)).

This sequence belongs to the cyclophilin-type PPIase family.

The enzyme catalyses [protein]-peptidylproline (omega=180) = [protein]-peptidylproline (omega=0). Functionally, PPIases accelerate the folding of proteins. It catalyzes the cis-trans isomerization of proline imidic peptide bonds in oligopeptides. This Mycobacterium tuberculosis (strain CDC 1551 / Oshkosh) protein is Probable peptidyl-prolyl cis-trans isomerase B (ppiB).